The chain runs to 176 residues: NADH-quinone oxidoreductase subunit I (176 aa).

4Fe-4S ferredoxin-type domains lie at 47–77 (LTRD…MQAA) and 87–116 (AWFR…MTSE). 8 residues coordinate [4Fe-4S] cluster: Cys57, Cys60, Cys63, Cys67, Cys96, Cys99, Cys102, and Cys106.

Belongs to the complex I 23 kDa subunit family. In terms of assembly, NDH-1 is composed of 14 different subunits. Subunits NuoA, H, J, K, L, M, N constitute the membrane sector of the complex. It depends on [4Fe-4S] cluster as a cofactor.

It is found in the cell inner membrane. It carries out the reaction a quinone + NADH + 5 H(+)(in) = a quinol + NAD(+) + 4 H(+)(out). Its function is as follows. NDH-1 shuttles electrons from NADH, via FMN and iron-sulfur (Fe-S) centers, to quinones in the respiratory chain. The immediate electron acceptor for the enzyme in this species is believed to be ubiquinone. Couples the redox reaction to proton translocation (for every two electrons transferred, four hydrogen ions are translocated across the cytoplasmic membrane), and thus conserves the redox energy in a proton gradient. The chain is NADH-quinone oxidoreductase subunit I from Syntrophotalea carbinolica (strain DSM 2380 / NBRC 103641 / GraBd1) (Pelobacter carbinolicus).